A 352-amino-acid polypeptide reads, in one-letter code: Divinyl chlorophyll a/b light-harvesting protein PcbB (352 aa).

Transmembrane regions (helical) follow at residues 27 to 47, 89 to 109, 142 to 162, 203 to 223, 243 to 263, and 307 to 327; these read FIAA…AFTL, CTVI…GGIL, FILG…VEWA, VMGG…FHII, AVLS…AFWS, and LANV…WHAL.

It belongs to the PsbB/PsbC family. IsiA/Pcb subfamily. In terms of assembly, the antenna complex consists of divinyl chlorophylls (a and b) and divinyl chlorophyll a/b binding proteins and binds more divinyl chlorophyll b than does the antenna complex from high-light-adapted Prochlorococcus. Divinyl chlorophyll a is required as a cofactor. Requires divinyl chlorophyll b as cofactor.

The protein resides in the cellular thylakoid membrane. Functionally, the antenna complex functions as a light receptor, it captures and delivers excitation energy to photosystems II and I. The Prochlorales pcb genes are not related to higher plant LHCs. The protein is Divinyl chlorophyll a/b light-harvesting protein PcbB (pcbB) of Prochlorococcus marinus (strain NATL2A).